Consider the following 76-residue polypeptide: UPF0291 protein BT9727_1737 (76 aa).

Belongs to the UPF0291 family.

The protein localises to the cytoplasm. This Bacillus thuringiensis subsp. konkukian (strain 97-27) protein is UPF0291 protein BT9727_1737.